A 438-amino-acid chain; its full sequence is Putative metabolite transport protein HI_0281 (438 aa).

At 1–17 (MSTQLRNNPMKVALASM) the chain is on the cytoplasmic side. A helical transmembrane segment spans residues 18-38 (VGTAIEFFDYYIYAAAAVLVF). Over 39–52 (NTQFFHSDDPLSND) the chain is Periplasmic. Residues 53–73 (LLSLSTLALAFFARPIGSALF) form a helical membrane-spanning segment. At 74-85 (GHFGDKIGRKKT) the chain is on the cytoplasmic side. Residues 86-106 (LVASLVLMGGSTVVIGLLPNY) traverse the membrane as a helical segment. The Periplasmic segment spans residues 107 to 115 (AQIGIWAPI). Residues 116–136 (LLCVCRVGQGIGLGGEWGGAA) traverse the membrane as a helical segment. The Cytoplasmic segment spans residues 137–156 (LVATENAPEGKRAWYGTFPQ). A helical transmembrane segment spans residues 157-177 (LGAPIGLFVANGTFFLVSYLL). The Periplasmic portion of the chain corresponds to 178–181 (GHNA). The chain crosses the membrane as a helical span at residues 182-202 (LVEWAWRIPFVSSILLVAVGL). At 203-239 (YVRLTLHESHVFVEAEQKGKKLNAPVSVVFTKHLKPM) the chain is on the cytoplasmic side. A helical transmembrane segment spans residues 240–260 (VIGTFIMVATYSLFYIMTAFA). The Periplasmic portion of the chain corresponds to 261–286 (QAYSRTAPKLSEAGYALGLGIPANTF). The chain crosses the membrane as a helical span at residues 287-307 (TGLLLISAIVFGIFISISGFY). At 308–314 (ADKIGRR) the chain is on the cytoplasmic side. The helical transmembrane segment at 315 to 336 (KWLIWVTIAIGVLGLAMPLFLE) threads the bilayer. Topologically, residues 337 to 342 (NGTPVS) are periplasmic. Residues 343 to 363 (VFAFLVIGMAIMGMTFGPMAA) traverse the membrane as a helical segment. The Cytoplasmic portion of the chain corresponds to 364–377 (LLPELFPTEVRYSG). Residues 378 to 398 (ASLAYNLASIIGATIAAMISL) form a helical membrane-spanning segment. Residues 399 to 405 (KINASFG) are Periplasmic-facing. A helical membrane pass occupies residues 406 to 426 (VMGVGIYLAINALMTFLALLA). The Cytoplasmic portion of the chain corresponds to 427–438 (SKETKNVDLTEI).

This sequence belongs to the major facilitator superfamily. Sugar transporter (TC 2.A.1.1) family.

It localises to the cell inner membrane. The polypeptide is Putative metabolite transport protein HI_0281 (Haemophilus influenzae (strain ATCC 51907 / DSM 11121 / KW20 / Rd)).